A 768-amino-acid chain; its full sequence is UPF0313 protein VV1_2212 (768 aa).

The Radical SAM core domain maps to 363-640 (AYDMIKTSVN…LHKALLRYHD (278 aa)). Cysteine 377, cysteine 381, and cysteine 384 together coordinate [4Fe-4S] cluster. Residues 674–768 (DARTPAQRRK…GGRNQPSRAR (95 aa)) form a disordered region. Basic residues predominate over residues 679–689 (AQRRKSGRHGA). The span at 719-731 (GGQSNSAPSRSGS) shows a compositional bias: polar residues.

Belongs to the UPF0313 family. The cofactor is [4Fe-4S] cluster.

The sequence is that of UPF0313 protein VV1_2212 from Vibrio vulnificus (strain CMCP6).